Consider the following 383-residue polypeptide: E3 ubiquitin-protein ligase SPL2 (383 aa).

At 1 to 14 the chain is on the cytoplasmic side; sequence MSSPERALLNLLTD. Residues 15–35 form a helical membrane-spanning segment; sequence IALSFDGAILGLTLAVSAVGS. Residues 36–269 are Chloroplast intermembrane-facing; that stretch reads ALKYASTNAA…MIEDLMEQTN (234 aa). Residues 270 to 290 form a helical membrane-spanning segment; the sequence is FIFLGSVILGIVSVGILSYAA. Topologically, residues 291–383 are cytoplasmic; the sequence is VRTWNKWKQW…IRGSMRVYYS (93 aa). The segment at 331-370 adopts an RING-type zinc-finger fold; sequence CVICVSRRRVPAFIPCGHVVCCRRCASTVERELNPKCPVC.

The protein localises to the plastid. Its subcellular location is the chloroplast outer membrane. The enzyme catalyses S-ubiquitinyl-[E2 ubiquitin-conjugating enzyme]-L-cysteine + [acceptor protein]-L-lysine = [E2 ubiquitin-conjugating enzyme]-L-cysteine + N(6)-ubiquitinyl-[acceptor protein]-L-lysine.. Its pathway is protein modification; protein ubiquitination. Its function is as follows. Possesses E3 ubiquitin-protein ligase activity. The chain is E3 ubiquitin-protein ligase SPL2 from Arabidopsis thaliana (Mouse-ear cress).